Reading from the N-terminus, the 521-residue chain is NAD(P)H-quinone oxidoreductase subunit 2 (521 aa).

Helical transmembrane passes span 16 to 36 (ILPE…DLIG), 40 to 60 (VALA…GLLV), 80 to 100 (LSII…LMSV), 110 to 130 (LAEF…LSAA), 133 to 153 (LVMV…MTGY), 168 to 188 (LLIG…LYGL), 212 to 232 (LGLA…ISAV), 246 to 266 (PTPV…AVAI), 280 to 300 (WHVI…VVAL), 308 to 328 (MLAY…VAGS), 336 to 356 (VFYM…IILF), 380 to 400 (LGLS…GFFG), 402 to 422 (IYIF…LGLV), and 468 to 488 (VGIV…NPLF).

It belongs to the complex I subunit 2 family. NDH-1 can be composed of about 15 different subunits; different subcomplexes with different compositions have been identified which probably have different functions.

It is found in the cellular thylakoid membrane. The catalysed reaction is a plastoquinone + NADH + (n+1) H(+)(in) = a plastoquinol + NAD(+) + n H(+)(out). It catalyses the reaction a plastoquinone + NADPH + (n+1) H(+)(in) = a plastoquinol + NADP(+) + n H(+)(out). Functionally, NDH-1 shuttles electrons from an unknown electron donor, via FMN and iron-sulfur (Fe-S) centers, to quinones in the respiratory and/or the photosynthetic chain. The immediate electron acceptor for the enzyme in this species is believed to be plastoquinone. Couples the redox reaction to proton translocation, and thus conserves the redox energy in a proton gradient. Cyanobacterial NDH-1 also plays a role in inorganic carbon-concentration. The chain is NAD(P)H-quinone oxidoreductase subunit 2 from Synechocystis sp. (strain ATCC 27184 / PCC 6803 / Kazusa).